A 4655-amino-acid polypeptide reads, in one-letter code: Low-density lipoprotein receptor-related protein 2 (4655 aa).

An N-terminal signal peptide occupies residues 1–25 (MDRGPAAVACTLLLALVACLAPASG). The Extracellular segment spans residues 26 to 4423 (QECDSAHFRC…FSKGISPGTT (4398 aa)). LDL-receptor class A domains lie at 27–63 (ECDSAHFRCGSGHCIPADWRCDGTKDCSDDADEIGCA), 66–104 (TCQQGYFKCQSEGQCIPNSWVCDQDQDCDDGSDERQDCS), 107–143 (TCSSHQITCSNGQCIPSEYRCDHVRDCPDGADENDCQ), 146–180 (TCEQLTCDNGACYNTSQKCDWKVDCRDSSDEINCT), 182–218 (ICLHNEFSCGNGECIPRAYVCDHDNDCQDGSDEHACN), 221–257 (TCGGYQFTCPSGRCIYQNWVCDGEDDCKDNGDEDGCE), and 265–308 (KCSP…KYCS). Disulfide bonds link C28-C40, C35-C53, C47-C62, C67-C80, C74-C93, C87-C103, C108-C120, C115-C133, C127-C142, C147-C157, C152-C170, C164-C179, C183-C195, C190-C208, C202-C217, C222-C234, C229-C247, C241-C256, C266-C279, C273-C292, and C286-C307. N-linked (GlcNAc...) asparagine glycosylation is found at N159 and N178. N-linked (GlcNAc...) asparagine glycosylation is found at N299, N300, N341, N388, and N463. 8 LDL-receptor class B repeats span residues 436–478 (QRVF…DWVN), 479–521 (NKIY…DPTV), 522–568 (GYLF…DMIS), 569–613 (KRVY…FEGQ), 753–795 (STIF…DWIS), 796–837 (KNLY…HPFA), 838–881 (GYLF…DWAA), and 882–925 (SRLY…FGEH). The N-linked (GlcNAc...) asparagine glycan is linked to N866. The 37-residue stretch at 1025 to 1061 (QCGLFSFPCKNGRCVPNYYLCDGVDDCHDNSDEQLCG) folds into the LDL-receptor class A 8 domain. 3 cysteine pairs are disulfide-bonded: C1026-C1038, C1033-C1051, and C1045-C1060. A glycan (N-linked (GlcNAc...) asparagine) is linked at N1064. LDL-receptor class A domains follow at residues 1066 to 1102 (TCSSSAFTCGHGECIPAHWRCDKRNDCVDGSDEHNCP), 1108 to 1144 (SCLDTQYTCDNHQCISKNWVCDTDNDCGDGSDEKNCN), 1148 to 1184 (TCQPSQFNCPNHRCIDLSFVCDGDKDCVDGSDEVGCV), 1186 to 1223 (NCTASQFKCASGDKCIGVTNRCDGVFDCSDNSDEAGCP), 1229 to 1267 (MCHSDEFQCQEDGICIPNFWECDGHPDCLYGSDEHNACV), 1270 to 1306 (TCPSSYFHCDNGNCIHRAWLCDRDNDCGDMSDEKDCP), and 1304 to 1349 (DCPT…PLCN). Intrachain disulfides connect C1067–C1079, C1074–C1092, C1086–C1101, C1109–C1121, C1116–C1134, and C1128–C1143. The Ca(2+) site is built by W1126, D1129, D1131, D1133, D1139, and E1140. N1144 carries an N-linked (GlcNAc...) asparagine glycan. Intrachain disulfides connect C1149-C1161, C1156-C1174, and C1168-C1183. The N-linked (GlcNAc...) asparagine glycan is linked to N1186. Disulfide bonds link C1187–C1200, C1194–C1213, C1207–C1222, C1230–C1243, C1237–C1256, C1250–C1266, C1271–C1283, C1278–C1296, C1290–C1305, C1305–C1325, C1312–C1338, and C1332–C1348. 5 residues coordinate Ca(2+): D1208, V1210, D1212, D1218, and E1219. N-linked (GlcNAc...) asparagine glycosylation is found at N1327, N1340, and N1383. Residues 1390-1429 (DIDECDILGSCSQHCYNMRGSFRCSCDTGYMLESDGRTCK) form the EGF-like 1; calcium-binding domain. Intrachain disulfides connect C1394–C1404, C1400–C1413, and C1415–C1428. N-linked (GlcNAc...) asparagine glycans are attached at residues N1464, N1496, and N1550. LDL-receptor class B repeat units lie at residues 1478 to 1520 (GRIF…DWVG), 1521 to 1563 (RNLY…DPRM), 1566 to 1609 (HLLF…DYPN), 1610 to 1654 (RLLY…FEDS), and 1655 to 1695 (VYWT…VHPS). An N-linked (GlcNAc...) asparagine glycan is attached at N1675. The 42-residue stretch at 1700–1741 (SVNPCAFSRCSHLCLLSSQGPHFYSCVCPSGWSLSPDLLNCL) folds into the EGF-like 2 domain. 3 disulfide bridges follow: C1704–C1713, C1709–C1725, and C1727–C1740. LDL-receptor class B repeat units follow at residues 1790 to 1832 (QYIY…DWIS), 1833 to 1882 (RNLY…DPAR), 1883 to 1930 (GKLY…DIEE), 1931 to 1972 (QKLY…HDSF), and 1973 to 2013 (LYYT…YHRR). N1810 is a glycosylation site (N-linked (GlcNAc...) asparagine). The N-linked (GlcNAc...) asparagine glycan is linked to N2055. LDL-receptor class B repeat units lie at residues 2107–2156 (GFIY…DWVA), 2157–2201 (GNLY…DPKN), 2202–2245 (RYLF…DRSD), 2246–2289 (GYVY…FENS), 2431–2477 (DRIY…DWIT), 2478–2518 (RRIY…DPCQ), 2519–2562 (GYLY…DYEE), 2563–2604 (DLLY…YGQY), and 2605–2646 (IYWT…VVKN). Residues N2177 and N2224 are each glycosylated (N-linked (GlcNAc...) asparagine). N-linked (GlcNAc...) asparagine glycosylation is found at N2499 and N2547. LDL-receptor class A domains are found at residues 2699–2737 (RCGASSFTCSNGRCISEEWKCDNDNDCGDGSDEMESVCA), 2740–2776 (TCSPTAFTCANGRCVQYSYRCDYYNDCGDGSDEAGCL), 2779–2818 (DCNATTEFMCNNRRCIPREFICNGVDNCHDNNTSDEKNCP), 2821–2860 (TCQSGYTKCHNSNICIPRVYLCDGDNDCGDNSDENPTYCT), 2863–2900 (TCSSSEFQCASGRCIPQHWYCDQETDCFDASDEPASCG), 2905–2944 (TCLADEFKCDGGRCIPSEWICDGDNDCGDMSDEDKRHQCQ), 2947–2989 (NCSD…QNCT), 2992–3028 (TCSENEFTCGYGLCIPKIFRCDRHNDCGDYSDERGCL), 3031–3069 (TCQQNQFTCQNGRCISKTFVCDEDNDCGDGSDELMHLCH), and 3074–3110 (TCPPHEFKCDNGRCIEMMKLCNHLDDCLDNSDEKGCG). 18 disulfide bridges follow: C2700/C2712, C2707/C2725, C2719/C2736, C2741/C2753, C2748/C2766, C2760/C2775, C2780/C2793, C2788/C2806, C2800/C2817, C2822/C2835, C2829/C2848, C2842/C2859, C2864/C2876, C2871/C2889, C2883/C2899, C2906/C2918, C2913/C2931, and C2925/C2943. Residue N2781 is glycosylated (N-linked (GlcNAc...) asparagine). N-linked (GlcNAc...) asparagine glycosylation is found at N2809 and N2810. Residue N2947 is glycosylated (N-linked (GlcNAc...) asparagine). 18 cysteine pairs are disulfide-bonded: C2948–C2965, C2955–C2978, C2972–C2988, C2993–C3005, C3000–C3018, C3012–C3027, C3032–C3044, C3039–C3057, C3051–C3068, C3075–C3087, C3082–C3100, C3094–C3109, C3114–C3126, C3122–C3135, C3137–C3150, C3156–C3167, C3163–C3176, and C3178–C3191. The N-linked (GlcNAc...) asparagine glycan is linked to N2987. Positions 3110–3151 (GINECHDPSISGCDHNCTDTLTSFYCSCRPGYKLMSDKRTCV) constitute an EGF-like 3 domain. Residue N3125 is glycosylated (N-linked (GlcNAc...) asparagine). In terms of domain architecture, EGF-like 4; calcium-binding spans 3152–3192 (DIDECTEMPFVCSQKCENVIGSYICKCAPGYLREPDGKTCR). N3211, N3257, N3315, and N3355 each carry an N-linked (GlcNAc...) asparagine glycan. LDL-receptor class B repeat units follow at residues 3239–3281 (KRLY…DWVS), 3282–3324 (RKLY…DNPR), 3333–3376 (GYLY…DYTN), 3377–3419 (DLLY…FEDT), and 3420–3460 (IYWT…YHPY). Residue N3446 is glycosylated (N-linked (GlcNAc...) asparagine). LDL-receptor class A domains follow at residues 3511-3549 (MCSSTQFLCANNEKCIPIWWKCDGQKDCSDGSDELALCP), 3552-3590 (FCRLGQFQCSDGNCTSPQTLCNAHQNCPDGSDEDRLLCE), 3593-3631 (HCDSNEWQCANKRCIPESWQCDTFNDCEDNSDEDSSHCA), 3634-3672 (TCRPGQFRCANGRCIPQAWKCDVDNDCGDHSDEPIEECM), 3677-3715 (LCDNFTEFSCKTNYRCIPKWAVCNGVDDCRDNSDEQGCE), 3718-3755 (TCHPVGDFRCKNHHCIPLRWQCDGQNDCGDNSDEENCA), 3758-3794 (ECTESEFRCVNQQCIPSRWICDHYNDCGDNSDERDCE), 3797-3833 (TCHPEYFQCTSGHCVHSELKCDGSADCLDASDEADCP), 3841-3879 (YCQATMFECKNHVCIPPYWKCDGDDDCGDGSDEELHLCL), 3882-3921 (PCNSPNRFRCDNNRCIYSHEVCNGVDDCGDGTDETEEHCR), and 3927-3963 (PCTEYEYKCGNGHCIPHDNVCDDADDCGDWSDELGCN). Disulfide bonds link C3512–C3525, C3519–C3538, C3532–C3548, C3553–C3565, C3560–C3578, C3572–C3589, C3594–C3606, C3601–C3619, C3613–C3630, C3635–C3647, C3642–C3660, C3654–C3671, C3678–C3692, C3686–C3705, C3699–C3714, C3719–C3732, C3727–C3745, C3739–C3754, C3759–C3771, C3766–C3784, C3778–C3793, C3798–C3810, C3805–C3823, C3817–C3832, C3842–C3854, C3849–C3867, C3861–C3878, C3883–C3896, C3891–C3909, C3903–C3920, C3928–C3940, C3935–C3953, and C3947–C3962. N3564 carries N-linked (GlcNAc...) asparagine glycosylation. The N-linked (GlcNAc...) asparagine glycan is linked to N3680. N3978 carries N-linked (GlcNAc...) asparagine glycosylation. In terms of domain architecture, EGF-like 5; calcium-binding spans 4007 to 4048 (DINECEQFGTCPQHCRNTKGSYECVCADGFTSMSDRPGKRCA). 3 cysteine pairs are disulfide-bonded: C4011-C4021, C4017-C4030, and C4032-C4047. N-linked (GlcNAc...) asparagine glycosylation is present at N4068. LDL-receptor class B repeat units lie at residues 4154 to 4196 (RHIY…NPKL), 4197 to 4240 (GLMF…DYLN), and 4242 to 4283 (DRIY…FEDQ). N4327 carries N-linked (GlcNAc...) asparagine glycosylation. The region spanning 4377–4411 (LPPPCRCMHGGNCYFDETDLPKCKCPSGYTGKYCE) is the EGF-like 6 domain. 3 disulfide bridges follow: C4381-C4389, C4383-C4399, and C4401-C4410. Residues 4424 to 4446 (AVAVLLTILLIVVIGALAIAGFF) traverse the membrane as a helical segment. Topologically, residues 4447 to 4655 (HYRRTGSLLP…ANLVKEDSEV (209 aa)) are cytoplasmic. The short motif at 4453–4462 (SLLPALPKLP) is the SH3-binding element. The PxLPxI/L motif 1; mediates interaction with ANKRA2 signature appears at 4456–4461 (PALPKL). The PxLPxI/L motif 2; mediates interaction with ANKRA2 signature appears at 4459-4464 (PKLPSL). S4463 and S4466 each carry phosphoserine. Positions 4521–4526 (FENPMY) match the Endocytosis signal motif. The tract at residues 4550–4574 (KNYGSPINPSEIVPETNPTSPAADG) is disordered. The segment covering 4565-4574 (TNPTSPAADG) has biased composition (polar residues). At S4569 the chain carries Phosphoserine. The segment at 4589–4602 (QTTNFENPIYAQME) is interaction with DAB2. The NPXY motif motif lies at 4595–4598 (NPIY). Positions 4598–4601 (YAQM) match the SH2-binding motif. The disordered stretch occupies residues 4601-4655 (MENEQKESVAATPPPSPSLPAKPKPPSRRDPTPTYSATEDTFKDTANLVKEDSEV). Residues 4611-4622 (ATPPPSPSLPAK) carry the SH3-binding motif. The segment covering 4612-4624 (TPPPSPSLPAKPK) has biased composition (pro residues). A Phosphoserine modification is found at S4616. Phosphothreonine is present on T4632. Residue S4653 is modified to Phosphoserine.

Belongs to the LDLR family. In terms of assembly, binds plasminogen, extracellular matrix components, plasminogen activator-plasminogen activator inhibitor type I complex, apolipoprotein E-enriched beta-VLDL, lipoprotein lipase, lactoferrin, CLU/clusterin and calcium. Forms a multimeric complex together with LRPAP1. Interacts (via PxLPxI/L motif) with ANKRA2 (via ankyrin repeats). Interacts with LRP2BP. Interacts (via NPXY motif) with DAB2; the interaction is not affected by tyrosine phosphorylation of the NPXY motif. Interacts with MB. Interacts with BMP4. Interacts with the Sonic hedgehog protein N-product which is the active product of SHH. Interacts with CST3 in a calcium-dependent manner. Interacts with the vitamin-D binding protein GC/DBP. Interacts with sex hormone-binding protein SHBG. Interacts with angiotensin-2. Also interacts with angiotensin 1-7. Interacts with APOM. Interacts with selenoprotein SEPP1. Interacts with LEP. Interacts with ALB. Interacts with the antiapoptotic protein BIRC5/survivin. Interacts with matrix metalloproteinase MMP2 in complex with metalloproteinase inhibitor TIMP1. In neurons, forms a trimeric complex with APP and APPB1/FE65. Interacts with LDLRAP1/ARH; mediates trafficking of LRP2 to the endocytic recycling compartment. Does not interact with beta-amyloid protein 40 alone but interacts with the complex composed of beta-amyloid protein 40 and CLU/APOJ. Interacts with MDK. Post-translationally, a fraction undergoes proteolytic cleavage of the extracellular domain at the cell membrane to generate a cytoplasmic tail fragment. This is internalized into the early endosome from where it trafficks in an LDLRAP1/ARH-dependent manner to the endocytic recycling compartment (ERC). In the ERC, it is further cleaved by gamma-secretase to release a fragment which translocates to the nucleus and mediates transcriptional repression. N-glycosylation is required for ligand binding. Expressed in first and third trimester cytotrophoblasts in the placenta (at protein level). Absorptive epithelia, including renal proximal tubules.

Its subcellular location is the apical cell membrane. It localises to the endosome lumen. It is found in the membrane. The protein localises to the coated pit. The protein resides in the cell projection. Its subcellular location is the dendrite. It localises to the axon. In terms of biological role, multiligand endocytic receptor. Acts together with CUBN to mediate endocytosis of high-density lipoproteins. Mediates receptor-mediated uptake of polybasic drugs such as aprotinin, aminoglycosides and polymyxin B. In the kidney, mediates the tubular uptake and clearance of leptin. Also mediates transport of leptin across the blood-brain barrier through endocytosis at the choroid plexus epithelium. Endocytosis of leptin in neuronal cells is required for hypothalamic leptin signaling and leptin-mediated regulation of feeding and body weight. Mediates endocytosis and subsequent lysosomal degradation of CST3 in kidney proximal tubule cells. Mediates renal uptake of 25-hydroxyvitamin D3 in complex with the vitamin D3 transporter GC/DBP. Mediates renal uptake of metallothionein-bound heavy metals. Together with CUBN, mediates renal reabsorption of myoglobin. Mediates renal uptake and subsequent lysosomal degradation of APOM. Plays a role in kidney selenium homeostasis by mediating renal endocytosis of selenoprotein SEPP1. Mediates renal uptake of the antiapoptotic protein BIRC5/survivin which may be important for functional integrity of the kidney. Mediates renal uptake of matrix metalloproteinase MMP2 in complex with metalloproteinase inhibitor TIMP1. Mediates endocytosis of Sonic hedgehog protein N-product (ShhN), the active product of SHH. Also mediates ShhN transcytosis. In the embryonic neuroepithelium, mediates endocytic uptake and degradation of BMP4, is required for correct SHH localization in the ventral neural tube and plays a role in patterning of the ventral telencephalon. Required at the onset of neurulation to sequester SHH on the apical surface of neuroepithelial cells of the rostral diencephalon ventral midline and to control PTCH1-dependent uptake and intracellular trafficking of SHH. During neurulation, required in neuroepithelial cells for uptake of folate bound to the folate receptor FOLR1 which is necessary for neural tube closure. In the adult brain, negatively regulates BMP signaling in the subependymal zone which enables neurogenesis to proceed. In astrocytes, mediates endocytosis of ALB which is required for the synthesis of the neurotrophic factor oleic acid. Involved in neurite branching. During optic nerve development, required for SHH-mediated migration and proliferation of oligodendrocyte precursor cells. Mediates endocytic uptake and clearance of SHH in the retinal margin which protects retinal progenitor cells from mitogenic stimuli and keeps them quiescent. Plays a role in reproductive organ development by mediating uptake in reproductive tissues of androgen and estrogen bound to the sex hormone binding protein SHBG. Mediates endocytosis of angiotensin-2. Also mediates endocytosis of angiotensis 1-7. Binds to the complex composed of beta-amyloid protein 40 and CLU/APOJ and mediates its endocytosis and lysosomal degradation. Required for embryonic heart development. Required for normal hearing, possibly through interaction with estrogen in the inner ear. The chain is Low-density lipoprotein receptor-related protein 2 from Homo sapiens (Human).